The chain runs to 177 residues: Large ribosomal subunit protein uL6 (177 aa).

It belongs to the universal ribosomal protein uL6 family. In terms of assembly, part of the 50S ribosomal subunit.

Functionally, this protein binds to the 23S rRNA, and is important in its secondary structure. It is located near the subunit interface in the base of the L7/L12 stalk, and near the tRNA binding site of the peptidyltransferase center. This Pseudomonas fluorescens (strain Pf0-1) protein is Large ribosomal subunit protein uL6.